Consider the following 260-residue polypeptide: Mediator of RNA polymerase II transcription subunit 8 (260 aa).

This sequence belongs to the Mediator complex subunit 8 family. In terms of assembly, component of the Mediator complex.

Its subcellular location is the nucleus. Component of the Mediator complex, a coactivator involved in the regulated transcription of nearly all RNA polymerase II-dependent genes. Mediator functions as a bridge to convey information from gene-specific regulatory proteins to the basal RNA polymerase II transcription machinery. Mediator is recruited to promoters by direct interactions with regulatory proteins and serves as a scaffold for the assembly of a functional preinitiation complex with RNA polymerase II and the general transcription factors. The chain is Mediator of RNA polymerase II transcription subunit 8 (med8) from Emericella nidulans (strain FGSC A4 / ATCC 38163 / CBS 112.46 / NRRL 194 / M139) (Aspergillus nidulans).